Consider the following 225-residue polypeptide: UPF0173 metal-dependent hydrolase PYRAB05000 (225 aa).

This sequence belongs to the UPF0173 family.

This is UPF0173 metal-dependent hydrolase PYRAB05000 from Pyrococcus abyssi (strain GE5 / Orsay).